The sequence spans 401 residues: Succinyl-diaminopimelate desuccinylase (401 aa).

Residue H71 coordinates Zn(2+). The active site involves D73. D104 contributes to the Zn(2+) binding site. Catalysis depends on E138, which acts as the Proton acceptor. The Zn(2+) site is built by E139, E167, and H352.

The protein belongs to the peptidase M20A family. DapE subfamily. As to quaternary structure, homodimer. It depends on Zn(2+) as a cofactor. Requires Co(2+) as cofactor.

The catalysed reaction is N-succinyl-(2S,6S)-2,6-diaminopimelate + H2O = (2S,6S)-2,6-diaminopimelate + succinate. Its pathway is amino-acid biosynthesis; L-lysine biosynthesis via DAP pathway; LL-2,6-diaminopimelate from (S)-tetrahydrodipicolinate (succinylase route): step 3/3. Its function is as follows. Catalyzes the hydrolysis of N-succinyl-L,L-diaminopimelic acid (SDAP), forming succinate and LL-2,6-diaminopimelate (DAP), an intermediate involved in the bacterial biosynthesis of lysine and meso-diaminopimelic acid, an essential component of bacterial cell walls. The polypeptide is Succinyl-diaminopimelate desuccinylase (Wolbachia sp. subsp. Brugia malayi (strain TRS)).